The primary structure comprises 310 residues: Beta-ketoacyl-[acyl-carrier-protein] synthase III (310 aa).

Catalysis depends on residues Cys112 and His235. The ACP-binding stretch occupies residues 236-240; the sequence is QANIR. Asn265 is a catalytic residue.

The protein belongs to the thiolase-like superfamily. FabH family. Homodimer.

It is found in the cytoplasm. It catalyses the reaction malonyl-[ACP] + acetyl-CoA + H(+) = 3-oxobutanoyl-[ACP] + CO2 + CoA. Its pathway is lipid metabolism; fatty acid biosynthesis. Its function is as follows. Catalyzes the condensation reaction of fatty acid synthesis by the addition to an acyl acceptor of two carbons from malonyl-ACP. Catalyzes the first condensation reaction which initiates fatty acid synthesis and may therefore play a role in governing the total rate of fatty acid production. Possesses both acetoacetyl-ACP synthase and acetyl transacylase activities. Its substrate specificity determines the biosynthesis of branched-chain and/or straight-chain of fatty acids. The protein is Beta-ketoacyl-[acyl-carrier-protein] synthase III of Geobacillus kaustophilus (strain HTA426).